A 407-amino-acid chain; its full sequence is Bifunctional enzyme IspD/IspF (407 aa).

Positions 1–247 (MVHIQADGAR…RLSHNALPDV (247 aa)) are 2-C-methyl-D-erythritol 4-phosphate cytidylyltransferase. The tract at residues 248–407 (RTGNGYDVHQ…ATVVFQGKPQ (160 aa)) is 2-C-methyl-D-erythritol 2,4-cyclodiphosphate synthase. Positions 254 and 256 each coordinate a divalent metal cation. 4-CDP-2-C-methyl-D-erythritol 2-phosphate is bound by residues 254-256 (DVH) and 280-281 (HS). Position 288 (His288) interacts with a divalent metal cation. Residues 302–304 (DIG), 378–381 (TTNE), Phe385, and Arg388 each bind 4-CDP-2-C-methyl-D-erythritol 2-phosphate.

In the N-terminal section; belongs to the IspD/TarI cytidylyltransferase family. IspD subfamily. It in the C-terminal section; belongs to the IspF family. A divalent metal cation serves as cofactor.

It carries out the reaction 2-C-methyl-D-erythritol 4-phosphate + CTP + H(+) = 4-CDP-2-C-methyl-D-erythritol + diphosphate. It catalyses the reaction 4-CDP-2-C-methyl-D-erythritol 2-phosphate = 2-C-methyl-D-erythritol 2,4-cyclic diphosphate + CMP. Its pathway is isoprenoid biosynthesis; isopentenyl diphosphate biosynthesis via DXP pathway; isopentenyl diphosphate from 1-deoxy-D-xylulose 5-phosphate: step 2/6. It functions in the pathway isoprenoid biosynthesis; isopentenyl diphosphate biosynthesis via DXP pathway; isopentenyl diphosphate from 1-deoxy-D-xylulose 5-phosphate: step 4/6. In terms of biological role, bifunctional enzyme that catalyzes the formation of 4-diphosphocytidyl-2-C-methyl-D-erythritol from CTP and 2-C-methyl-D-erythritol 4-phosphate (MEP) (IspD), and catalyzes the conversion of 4-diphosphocytidyl-2-C-methyl-D-erythritol 2-phosphate (CDP-ME2P) to 2-C-methyl-D-erythritol 2,4-cyclodiphosphate (ME-CPP) with a corresponding release of cytidine 5-monophosphate (CMP) (IspF). The chain is Bifunctional enzyme IspD/IspF from Allorhizobium ampelinum (strain ATCC BAA-846 / DSM 112012 / S4) (Agrobacterium vitis (strain S4)).